The following is a 299-amino-acid chain: Formamidopyrimidine-DNA glycosylase (299 aa).

The active-site Schiff-base intermediate with DNA is the Pro-2. Glu-3 serves as the catalytic Proton donor. Lys-58 (proton donor; for beta-elimination activity) is an active-site residue. Positions 106, 125, and 168 each coordinate DNA. Residues 259–295 form an FPG-type zinc finger; the sequence is RVYDRVGHACPTKGCTGRVGRIVQGGRSTFFCETCQV. Arg-285 functions as the Proton donor; for delta-elimination activity in the catalytic mechanism.

It belongs to the FPG family. As to quaternary structure, monomer. Requires Zn(2+) as cofactor.

The catalysed reaction is Hydrolysis of DNA containing ring-opened 7-methylguanine residues, releasing 2,6-diamino-4-hydroxy-5-(N-methyl)formamidopyrimidine.. It carries out the reaction 2'-deoxyribonucleotide-(2'-deoxyribose 5'-phosphate)-2'-deoxyribonucleotide-DNA = a 3'-end 2'-deoxyribonucleotide-(2,3-dehydro-2,3-deoxyribose 5'-phosphate)-DNA + a 5'-end 5'-phospho-2'-deoxyribonucleoside-DNA + H(+). Involved in base excision repair of DNA damaged by oxidation or by mutagenic agents. Acts as a DNA glycosylase that recognizes and removes damaged bases. Has a preference for oxidized purines, such as 7,8-dihydro-8-oxoguanine (8-oxoG). Has AP (apurinic/apyrimidinic) lyase activity and introduces nicks in the DNA strand. Cleaves the DNA backbone by beta-delta elimination to generate a single-strand break at the site of the removed base with both 3'- and 5'-phosphates. This is Formamidopyrimidine-DNA glycosylase from Methylorubrum extorquens (strain CM4 / NCIMB 13688) (Methylobacterium extorquens).